A 242-amino-acid polypeptide reads, in one-letter code: Triosephosphate isomerase (242 aa).

Position 9–11 (9–11 (NWK)) interacts with substrate. The Electrophile role is filled by H90. Residue E162 is the Proton acceptor of the active site. Substrate contacts are provided by residues G168, S205, and 226-227 (GG).

Belongs to the triosephosphate isomerase family. As to quaternary structure, homodimer.

Its subcellular location is the cytoplasm. It catalyses the reaction D-glyceraldehyde 3-phosphate = dihydroxyacetone phosphate. Its pathway is carbohydrate biosynthesis; gluconeogenesis. The protein operates within carbohydrate degradation; glycolysis; D-glyceraldehyde 3-phosphate from glycerone phosphate: step 1/1. In terms of biological role, involved in the gluconeogenesis. Catalyzes stereospecifically the conversion of dihydroxyacetone phosphate (DHAP) to D-glyceraldehyde-3-phosphate (G3P). This is Triosephosphate isomerase from Azoarcus sp. (strain BH72).